Reading from the N-terminus, the 126-residue chain is MEKDLKFTASHEWVRENGDGTVTVGISNHAQGLLGDVVFVDLPDVDDEVTAGENFSLVESVKAASDIYAPISGVIVEINEELEDSPELVNEEPYEGGWIARIKLSDDGDLENLIPGDQYLESIEEE.

Positions 21-103 (TVTVGISNHA…YEGGWIARIK (83 aa)) constitute a Lipoyl-binding domain. K62 is subject to N6-lipoyllysine.

The protein belongs to the GcvH family. As to quaternary structure, the glycine cleavage system is composed of four proteins: P, T, L and H. It depends on (R)-lipoate as a cofactor.

The glycine cleavage system catalyzes the degradation of glycine. The H protein shuttles the methylamine group of glycine from the P protein to the T protein. In Aliivibrio salmonicida (strain LFI1238) (Vibrio salmonicida (strain LFI1238)), this protein is Glycine cleavage system H protein.